A 227-amino-acid chain; its full sequence is Protein Saci_0792 (227 aa).

The AMMECR1 domain occupies 15 to 209 (DIGKQLIKIA…EINKNTDEII (195 aa)).

This Sulfolobus acidocaldarius (strain ATCC 33909 / DSM 639 / JCM 8929 / NBRC 15157 / NCIMB 11770) protein is Protein Saci_0792.